The sequence spans 31 residues: Phallacidin proprotein 1 (31 aa).

Residues methionine 1 to proline 10 constitute a propeptide that is removed on maturation. The segment at residues alanine 11–proline 17 is a cross-link (cyclopeptide (Ala-Pro)). The 2'-cysteinyl-6'-hydroxytryptophan sulfoxide (Trp-Cys) cross-link spans tryptophan 12–cysteine 16. Residues cysteine 18 to glutamate 31 constitute a propeptide that is removed on maturation.

Belongs to the MSDIN fungal toxin family. Post-translationally, processed by the macrocyclase-peptidase enzyme POPB to yield a toxic cyclic heptapeptide. POPB first removes 10 residues from the N-terminus. Conformational trapping of the remaining peptide forces the enzyme to release this intermediate rather than proceed to macrocyclization. The enzyme rebinds the remaining peptide in a different conformation and catalyzes macrocyclization of the N-terminal 7 residues.

In terms of biological role, major toxin that belongs to the bicyclic heptapeptides called phallotoxins. Although structurally related to amatoxins, phallotoxins have a different mode of action, which is the stabilization of F-actin. Phallotoxins are poisonous when administered parenterally, but not orally because of poor absorption. This is Phallacidin proprotein 1 (PHA1_2) from Amanita bisporigera (Destroying angel).